The following is a 62-amino-acid chain: Large ribosomal subunit protein uL30 (62 aa).

This sequence belongs to the universal ribosomal protein uL30 family. As to quaternary structure, part of the 50S ribosomal subunit.

The sequence is that of Large ribosomal subunit protein uL30 from Herpetosiphon aurantiacus (strain ATCC 23779 / DSM 785 / 114-95).